Here is a 34-residue protein sequence, read N- to C-terminus: Photosystem II reaction center protein M (34 aa).

The chain crosses the membrane as a helical span at residues 5–25 (ILAFIATALFVLIPTAFLIIL).

The protein belongs to the PsbM family. PSII is composed of 1 copy each of membrane proteins PsbA, PsbB, PsbC, PsbD, PsbE, PsbF, PsbH, PsbI, PsbJ, PsbK, PsbL, PsbM, PsbT, PsbX, PsbY, PsbZ, Psb30/Ycf12, at least 3 peripheral proteins of the oxygen-evolving complex and a large number of cofactors. It forms dimeric complexes.

Its subcellular location is the plastid. The protein localises to the chloroplast thylakoid membrane. In terms of biological role, one of the components of the core complex of photosystem II (PSII). PSII is a light-driven water:plastoquinone oxidoreductase that uses light energy to abstract electrons from H(2)O, generating O(2) and a proton gradient subsequently used for ATP formation. It consists of a core antenna complex that captures photons, and an electron transfer chain that converts photonic excitation into a charge separation. This subunit is found at the monomer-monomer interface. The polypeptide is Photosystem II reaction center protein M (Zygnema circumcarinatum (Green alga)).